Reading from the N-terminus, the 333-residue chain is Flap endonuclease 1 (333 aa).

Positions 1 to 99 are N-domain; sequence MGVAIRDILA…ETINERREHR (99 aa). The Mg(2+) site is built by Asp-28, Asp-81, Glu-153, Glu-155, Asp-174, Asp-176, and Asp-235. Residues 117–255 are I-domain; that stretch reads EAYKQASASA…KTALKIVRNG (139 aa). The interaction with PCNA stretch occupies residues 325–333; it reads TQKTLDAWF.

Belongs to the XPG/RAD2 endonuclease family. FEN1 subfamily. As to quaternary structure, interacts with PCNA. PCNA stimulates the nuclease activity without altering cleavage specificity. The cofactor is Mg(2+).

Structure-specific nuclease with 5'-flap endonuclease and 5'-3' exonuclease activities involved in DNA replication and repair. During DNA replication, cleaves the 5'-overhanging flap structure that is generated by displacement synthesis when DNA polymerase encounters the 5'-end of a downstream Okazaki fragment. Binds the unpaired 3'-DNA end and kinks the DNA to facilitate 5' cleavage specificity. Cleaves one nucleotide into the double-stranded DNA from the junction in flap DNA, leaving a nick for ligation. Also involved in the base excision repair (BER) pathway. Acts as a genome stabilization factor that prevents flaps from equilibrating into structures that lead to duplications and deletions. Also possesses 5'-3' exonuclease activity on nicked or gapped double-stranded DNA. This chain is Flap endonuclease 1, found in Methanoculleus marisnigri (strain ATCC 35101 / DSM 1498 / JR1).